Reading from the N-terminus, the 123-residue chain is Thioredoxin domain-containing protein 17 (123 aa).

Residue Ala-2 is modified to N-acetylalanine. A Thioredoxin domain is found at 41 to 123 (SWCPDCVEAE…SLVEMIFSED (83 aa)). Residues Cys-43 and Cys-46 each act as nucleophile in the active site. Cys-43 and Cys-46 are disulfide-bonded.

Belongs to the thioredoxin family. As to quaternary structure, interacts with TRXR1 and DYNLL1/DNCL1. In terms of processing, the oxidized protein is reduced by TRXR1.

The protein resides in the cytoplasm. In terms of biological role, disulfide reductase. May participate in various redox reactions through the reversible oxidation of its active center dithiol to a disulfide and catalyze dithiol-disulfide exchange reactions. Modulates TNF-alpha signaling and NF-kappa-B activation. Has peroxidase activity and may contribute to the elimination of cellular hydrogen peroxide. This Mus musculus (Mouse) protein is Thioredoxin domain-containing protein 17 (Txndc17).